The chain runs to 217 residues: GTP-binding protein Rit2 (217 aa).

Residues 27–34, 74–78, and 133–136 each bind GTP; these read GAGGVGKS, DTAGQ, and NKID.

It belongs to the small GTPase superfamily. Ras family. Interacts with AFDN, the C-terminal domain of RALGDS and RLF, but not with RIN1 and PIK3CA. RLF binds exclusively to the active GTP-bound form. Binds calmodulin. Interacts with PLXNB3.

It localises to the nucleus. The protein resides in the cell membrane. The enzyme catalyses GTP + H2O = GDP + phosphate + H(+). Alternates between an inactive form bound to GDP and an active form bound to GTP. Functionally, binds and exchanges GTP and GDP. The polypeptide is GTP-binding protein Rit2 (Rit2) (Rattus norvegicus (Rat)).